Consider the following 211-residue polypeptide: Protein DEHYDRATION-INDUCED 19 homolog 7 (211 aa).

Thr-113 is subject to Phosphothreonine. Residues 163 to 194 (GDSVAQVSPKDTSKSKIQQESFSNEDQEKAKK) form a disordered region. Over residues 167–186 (AQVSPKDTSKSKIQQESFSN) the composition is skewed to polar residues.

It belongs to the Di19 family. Not phosphorylated in vitro by CPK3 or CPK11. As to expression, expressed in seedlings, roots, leaves, stems, flowers and siliques.

It localises to the nucleus. Functionally, involved in both red and blue light signaling. The sequence is that of Protein DEHYDRATION-INDUCED 19 homolog 7 (DI19-7) from Arabidopsis thaliana (Mouse-ear cress).